The following is a 546-amino-acid chain: Cytokine-like nuclear factor N-PAC (546 aa).

Residues 8–66 enclose the PWWP domain; sequence LGDLVWGKLGRYPPWPGKIVNPPKDLKKPRGKKCFFVKFFGTEDHAWIKVEQLKPYHAH. 2 stretches are compositionally biased toward basic and acidic residues: residues 91–145 and 161–181; these read RRAK…EGKK and RAQE…KDLT. Positions 91–187 are disordered; that stretch reads RRAKGKDQTS…KDLTIPESST (97 aa). A Phosphoserine modification is found at serine 130. Lysine 135 is covalently cross-linked (Glycyl lysine isopeptide (Lys-Gly) (interchain with G-Cter in SUMO2)). Serine 166 carries the post-translational modification Phosphoserine. The segment at residues 167–179 is a DNA-binding region (a.T hook); sequence PRKRGRPPKDEKD. Residues lysine 175, lysine 178, lysine 200, and lysine 210 each participate in a glycyl lysine isopeptide (Lys-Gly) (interchain with G-Cter in SUMO2) cross-link. Positions 213–216 are interaction with histone H3; that stretch reads DPHF. The tract at residues 215 to 224 is interaction with KDM1B; it reads HFHHFLLSQT. Glycyl lysine isopeptide (Lys-Gly) (interchain with G-Cter in SUMO2) cross-links involve residues lysine 226, lysine 236, lysine 239, and lysine 268. The dehydrogenase domain stretch occupies residues 260-546; the sequence is GSITPTDKKI…MSAVYRAYIH (287 aa). 270–284 is a binding site for NAD(+); it reads GFLGLGLMGSGIVSN. Lysine 301 participates in a covalent cross-link: Glycyl lysine isopeptide (Lys-Gly) (interchain with G-Cter in SUMO2). NAD(+)-binding residues include threonine 355 and lysine 498. Phosphoserine is present on serine 533.

Belongs to the HIBADH-related family. NP60 subfamily. Homotetramere. Interacts with MAPK14. Interacts with KDM1B at nucleosomes; this interaction stimulates H3K4me1 and H3K4me2 demethylation. Binds to mononucleosomes. Interacts with GATA4; the interaction is required for a synergistic activation of GATA4 target genes transcription.

The protein localises to the nucleus. It is found in the chromosome. Cytokine-like nuclear factor with chromatin gene reader activity involved in chromatin modification and regulation of gene expression. Acts as a nucleosome-destabilizing factor that is recruited to genes during transcriptional activation. Recognizes and binds histone H3 without a preference for specific epigenetic markers and also binds DNA. Interacts with KDM1B and promotes its histone demethylase activity by facilitating the capture of H3 tails, they form a multifunctional enzyme complex that modifies transcribed chromatin and facilitates Pol II transcription through nucleosomes. Stimulates the acetylation of 'Lys-56' of nucleosomal histone H3 (H3K56ac) by EP300. With GATA4, co-binds a defined set of heart development genes and coregulates their expression during cardiomyocyte differentiation. Regulates p38 MAP kinase activity by mediating stress activation of MAPK14/p38alpha and specifically regulating MAPK14 signaling. Indirectly promotes phosphorylation of MAPK14 and activation of ATF2. The phosphorylation of MAPK14 requires upstream activity of MAP2K4 and MAP2K6. The chain is Cytokine-like nuclear factor N-PAC from Mus musculus (Mouse).